Here is a 293-residue protein sequence, read N- to C-terminus: Nucleotide-binding protein HRM2_27900 (293 aa).

Residue 11–18 (GLSGSGKS) coordinates ATP. 62 to 65 (DIRA) lines the GTP pocket.

It belongs to the RapZ-like family.

Displays ATPase and GTPase activities. This Desulforapulum autotrophicum (strain ATCC 43914 / DSM 3382 / VKM B-1955 / HRM2) (Desulfobacterium autotrophicum) protein is Nucleotide-binding protein HRM2_27900.